The primary structure comprises 468 residues: Probable acid phosphatase DIA3 (468 aa).

The N-terminal stretch at 1–20 is a signal peptide; sequence MVKPVIFAICLGVLLSKALS. The active-site Nucleophile is the His-76. Asn-98, Asn-163, Asn-193, Asn-202, Asn-238, Asn-251, and Asn-316 each carry an N-linked (GlcNAc...) asparagine glycan. The Proton donor role is filled by Asp-339. Residues Asn-357, Asn-391, Asn-457, and Asn-462 are each glycosylated (N-linked (GlcNAc...) asparagine).

This sequence belongs to the histidine acid phosphatase family.

It carries out the reaction a phosphate monoester + H2O = an alcohol + phosphate. In Saccharomyces cerevisiae (strain ATCC 204508 / S288c) (Baker's yeast), this protein is Probable acid phosphatase DIA3 (DIA3).